A 121-amino-acid chain; its full sequence is Acidic phospholipase A2 PLA-2 (121 aa).

Disulfide bonds link Cys-26–Cys-115, Cys-28–Cys-44, Cys-43–Cys-95, Cys-49–Cys-121, Cys-50–Cys-88, Cys-57–Cys-81, and Cys-75–Cys-86. Ca(2+)-binding residues include Tyr-27, Gly-29, and Gly-31. Residue His-47 is part of the active site. Ca(2+) is bound at residue Asp-48. Asp-89 is a catalytic residue.

This sequence belongs to the phospholipase A2 family. Group II subfamily. D49 sub-subfamily. Ca(2+) is required as a cofactor. Expressed by the venom gland.

It is found in the secreted. The catalysed reaction is a 1,2-diacyl-sn-glycero-3-phosphocholine + H2O = a 1-acyl-sn-glycero-3-phosphocholine + a fatty acid + H(+). Its function is as follows. PLA2 catalyzes the calcium-dependent hydrolysis of the 2-acyl groups in 3-sn-phosphoglycerides. The protein is Acidic phospholipase A2 PLA-2 of Eristicophis macmahoni (Leaf-nosed viper).